The following is a 710-amino-acid chain: Probable GTP diphosphokinase RSH2, chloroplastic (710 aa).

A chloroplast-targeting transit peptide spans 1 to 63 (MVVATTIALY…SSLFSSASVK (63 aa)). The HD domain maps to 233 to 337 (YLQHCVETAM…IKLADRLHNM (105 aa)).

Belongs to the RelA/SpoT family.

The protein localises to the plastid. It is found in the chloroplast. The catalysed reaction is GTP + ATP = guanosine 3'-diphosphate 5'-triphosphate + AMP. Probable ppGpp (guanosine 3'-diphosphate 5'-diphosphate) synthetase that may be involved in a rapid plant ppGpp-mediated response to pathogens and other stresses. The protein is Probable GTP diphosphokinase RSH2, chloroplastic (RSH2) of Arabidopsis thaliana (Mouse-ear cress).